Reading from the N-terminus, the 557-residue chain is TWiK family of potassium channels protein 7 (557 aa).

Disordered regions lie at residues 1–34 and 128–151; these read MTSSSRGYQRVDSSGDGGSLLMEEEGDNPHEALL and DKSGHEDIDDESDDESKDEDEEEE. Residues 1-165 lie on the Cytoplasmic side of the membrane; it reads MTSSSRGYQR…RKFAKLVLPH (165 aa). Residues 134–151 show a composition bias toward acidic residues; it reads DIDDESDDESKDEDEEEE. The chain crosses the membrane as a helical span at residues 166–186; sequence VALVLLTCTYTVIGALIFYSV. Asn220 and Asn237 each carry an N-linked (GlcNAc...) asparagine glycan. The segment at residues 270–290 is an intramembrane region (pore-forming); it reads SIFFAVTVVTTIGYGNPVPVT. A helical transmembrane segment spans residues 295-315; that stretch reads IWCILFSLLGIPLTLVTIADL. Over 316 to 368 the chain is Cytoplasmic; the sequence is GKFLSEHLVWLYGNYLKLKYLILSRHRKERREHVCEHCHSHGMGHDMNIEEKR. Residues 369 to 389 form a helical membrane-spanning segment; the sequence is IPAFLVLAILIVYTAFGGVLM. Residues 397-417 constitute an intramembrane region (pore-forming); the sequence is FFTSFYWSFITMTTVGFGDLM. The chain crosses the membrane as a helical span at residues 426-446; that stretch reads IILLYIILGLAITTMCIDLVG. The Cytoplasmic portion of the chain corresponds to 447–557; sequence VQYIRKIHYF…SRYSLNRAFK (111 aa).

Belongs to the two pore domain potassium channel (TC 1.A.1.8) family.

The protein resides in the membrane. In Caenorhabditis elegans, this protein is TWiK family of potassium channels protein 7 (twk-7).